The chain runs to 90 residues: Probable Fe(2+)-trafficking protein (90 aa).

This sequence belongs to the Fe(2+)-trafficking protein family. As to quaternary structure, monomer.

In terms of biological role, could be a mediator in iron transactions between iron acquisition and iron-requiring processes, such as synthesis and/or repair of Fe-S clusters in biosynthetic enzymes. The chain is Probable Fe(2+)-trafficking protein from Sodalis glossinidius (strain morsitans).